The sequence spans 198 residues: Ribonuclease HII (198 aa).

The RNase H type-2 domain maps to 10–198 (QLVAGVDEVG…PVKRALGLAS (189 aa)). Positions 16, 17, and 108 each coordinate a divalent metal cation.

The protein belongs to the RNase HII family. Mn(2+) serves as cofactor. Requires Mg(2+) as cofactor.

The protein localises to the cytoplasm. The enzyme catalyses Endonucleolytic cleavage to 5'-phosphomonoester.. Endonuclease that specifically degrades the RNA of RNA-DNA hybrids. The sequence is that of Ribonuclease HII from Escherichia coli O45:K1 (strain S88 / ExPEC).